The chain runs to 360 residues: uncharacterized protein (360 aa).

A disordered region spans residues 193-245 (SRHTRPKGQPLSSPKKNSGSAARPSTAIGLCRRSQTPGALQSTGPSNTELEPE). Composition is skewed to polar residues over residues 202–212 (PLSSPKKNSGS) and 225–241 (RSQT…SNTE).

This is an uncharacterized protein from Homo sapiens (Human).